Consider the following 4690-residue polypeptide: Nonribosomal peptide synthetase sidN (4690 aa).

An adenylation 1 region spans residues 238-656 (ARVRENPGRI…LGRLSSDQIK (419 aa)). Residues 779–856 (SSSIPMLQSV…DLDTKAQQAL (78 aa)) form the Carrier 1 domain. S816 carries the post-translational modification O-(pantetheine 4'-phosphoryl)serine. Positions 925–1175 (PGGKAFIQHT…AFGNTMSGRF (251 aa)) are condensation 1. The tract at residues 1349–1760 (EFAQKSPNAI…GRKDDLVKIR (412 aa)) is adenylation 2. The Carrier 2 domain maps to 1889–1965 (PAWCIKHRPL…DLINHLSVKR (77 aa)). S1926 is subject to O-(pantetheine 4'-phosphoryl)serine. The interval 2001–2285 (PTTVFQDGML…SERLLESQLV (285 aa)) is condensation 2. Positions 2464-2869 (TWAKTHPEWK…GRKDEQVKVR (406 aa)) are adenylation 3. The Carrier 3 domain maps to 3002–3079 (RDLTSIEKQI…ELGRMKNALK (78 aa)). S3040 carries the O-(pantetheine 4'-phosphoryl)serine modification. A condensation 3 region spans residues 3121 to 3530 (CMPLQEVLVA…QMESLVTSFT (410 aa)). A Carrier 4 domain is found at 3564–3637 (SVLEQQIRDV…KLATHIQTTS (74 aa)). S3598 is modified (O-(pantetheine 4'-phosphoryl)serine). Positions 3679–4087 (VYPLTPLQAG…FESIRKHPDE (409 aa)) are condensation 4. One can recognise a Carrier 5 domain in the interval 4119-4195 (SAIDQFLDPL…KLCEVAFAKS (77 aa)). S4156 carries the O-(pantetheine 4'-phosphoryl)serine modification. Residues 4262–4589 (WVFKAENGLD…FNAHLNILWN (328 aa)) are condensation 5.

This sequence belongs to the NRP synthetase family.

It functions in the pathway siderophore biosynthesis. Functionally, nonribosomal peptide synthetase required for the biosynthetis of epichloenin A, an extracellular siderophore that plays a crucial role in endophyte-grass symbioses. SidN assembles epichloenin A by activating and incorporating three trans-anhydromevalonylhydroxyornithine (trans-AMHO), 1 glutamine and 4 glycine moieties. Trans-AMHO is produced from L-ornithine via 2 steps involving a L-ornithine N(5)-monooxygenase and an AHMO-N(5)-transacylase that have still to be identified. The third adenylation domain (A3) of sidN incorporates the hydroxamate groups of the siderophore which forms an octahedral iron complex. The other component amino acids are assembled by sidN adenylation domains A1 and A2. This is Nonribosomal peptide synthetase sidN from Epichloe festucae (strain E2368).